The chain runs to 86 residues: ATP synthase subunit c (86 aa).

2 consecutive transmembrane segments (helical) span residues Phe13–Ala33 and Ile63–Leu83.

Belongs to the ATPase C chain family. As to quaternary structure, F-type ATPases have 2 components, F(1) - the catalytic core - and F(0) - the membrane proton channel. F(1) has five subunits: alpha(3), beta(3), gamma(1), delta(1), epsilon(1). F(0) has three main subunits: a(1), b(2) and c(10-14). The alpha and beta chains form an alternating ring which encloses part of the gamma chain. F(1) is attached to F(0) by a central stalk formed by the gamma and epsilon chains, while a peripheral stalk is formed by the delta and b chains.

It localises to the cell membrane. Functionally, f(1)F(0) ATP synthase produces ATP from ADP in the presence of a proton or sodium gradient. F-type ATPases consist of two structural domains, F(1) containing the extramembraneous catalytic core and F(0) containing the membrane proton channel, linked together by a central stalk and a peripheral stalk. During catalysis, ATP synthesis in the catalytic domain of F(1) is coupled via a rotary mechanism of the central stalk subunits to proton translocation. Key component of the F(0) channel; it plays a direct role in translocation across the membrane. A homomeric c-ring of between 10-14 subunits forms the central stalk rotor element with the F(1) delta and epsilon subunits. The protein is ATP synthase subunit c of Acholeplasma laidlawii (strain PG-8A).